Here is a 393-residue protein sequence, read N- to C-terminus: MITMIRRFIRLDAAAGMMLMMATVLAIALANWSVTAAGYQQFLMIPVEMRFGALEINKNLLLWINDALMAIFFLLIGLEVKRELVEGTLASRQQAMLPLAAAVGGMVFPALLFLLFNANDDVTRAGWAIPAATDIAFAIGVLTLLGKRVPAGLKVFLLALAIIDDLGAILIIALFYTQQVFWPALAGAVLAIAVLAYMNKLQVGKTSAYLLVGGVLWVCILKCGVHATLAGVIVGFFIPLRTSDGEPSPATSLEHGLQTWVAFLIVPLFAFANAGIVLQGIVLEKLFSPLSLGIAAGLLLGKPLGITLFSWLTIRLGYARLPVGVHFNQIVAVSVLCGIGFTMSIFITLLAFSGGDAELITYAKLGILLASGLAALLGYLALRGVLPALDKAV.

The next 11 membrane-spanning stretches (helical) occupy residues 14–34 (AAGM…NWSV), 60–80 (LLLW…GLEV), 96–116 (MLPL…FLLF), 125–145 (AGWA…LTLL), 155–175 (VFLL…IALF), 179–199 (QVFW…AYMN), 218–238 (VCIL…GFFI), 263–283 (FLIV…GIVL), 292–312 (LGIA…FSWL), 330–350 (IVAV…ITLL), and 362–382 (YAKL…YLAL).

It belongs to the NhaA Na(+)/H(+) (TC 2.A.33) antiporter family.

Its subcellular location is the cell inner membrane. It carries out the reaction Na(+)(in) + 2 H(+)(out) = Na(+)(out) + 2 H(+)(in). Its function is as follows. Na(+)/H(+) antiporter that extrudes sodium in exchange for external protons. The polypeptide is Na(+)/H(+) antiporter NhaA (Pectobacterium atrosepticum (strain SCRI 1043 / ATCC BAA-672) (Erwinia carotovora subsp. atroseptica)).